Here is a 101-residue protein sequence, read N- to C-terminus: Therostasin (101 aa).

The signal sequence occupies residues 1 to 19; that stretch reads MRGLAVLLLVACFCSVAFG. 2 consecutive Antistasin-like domains span residues 21-46 and 49-75; these read CENTECPRACPGEYEFDEDGCNTCLC and CNDAQCRIYCPLGFTTDANGCESFCTC.

Salivary glands.

The protein localises to the secreted. Potent inhibitor of factor Xa. It also inhibits trypsin in a weaker manner. This Theromyzon tessulatum (Duck leech) protein is Therostasin.